A 116-amino-acid chain; its full sequence is Mercuric transport protein MerT (116 aa).

Helical transmembrane passes span 16 to 36 (LAAI…ALGF) and 46 to 66 (VLEP…FFAW). 2 residues coordinate Hg(2+): Cys24 and Cys25. Residues Cys76 and Cys82 each coordinate Hg(2+). A helical membrane pass occupies residues 94-114 (IFWVVAALVLVALGFPYVMPF).

Belongs to the MerT family.

The protein resides in the cell inner membrane. Involved in mercury resistance. Probably transfers a mercuric ion from the periplasmic Hg(2+)-binding protein MerP to the cytoplasmic mercuric reductase MerA. The protein is Mercuric transport protein MerT of Serratia marcescens.